Reading from the N-terminus, the 157-residue chain is Ribonuclease H (157 aa).

The RNase H type-1 domain maps to 1 to 142; it reads MKKKIKIFID…CDFLAKISAK (142 aa). Residues D10, E48, D70, and D134 each contribute to the Mg(2+) site.

The protein belongs to the RNase H family. In terms of assembly, monomer. The cofactor is Mg(2+).

It is found in the cytoplasm. It catalyses the reaction Endonucleolytic cleavage to 5'-phosphomonoester.. In terms of biological role, endonuclease that specifically degrades the RNA of RNA-DNA hybrids. This chain is Ribonuclease H, found in Wigglesworthia glossinidia brevipalpis.